Here is a 186-residue protein sequence, read N- to C-terminus: Elongation factor P (186 aa).

This sequence belongs to the elongation factor P family.

The protein localises to the cytoplasm. It participates in protein biosynthesis; polypeptide chain elongation. Functionally, involved in peptide bond synthesis. Stimulates efficient translation and peptide-bond synthesis on native or reconstituted 70S ribosomes in vitro. Probably functions indirectly by altering the affinity of the ribosome for aminoacyl-tRNA, thus increasing their reactivity as acceptors for peptidyl transferase. The chain is Elongation factor P from Shewanella sp. (strain W3-18-1).